We begin with the raw amino-acid sequence, 1384 residues long: ABC transporter C family member 2 (1384 aa).

Residues 104-388 form the ABC transmembrane type-1 1 domain; it reads NKISVATKIF…LPEAIHRALS (285 aa). 5 helical membrane passes run 112–132, 140–160, 226–246, 247–267, and 333–353; these read IFVA…IYYI, TFKF…SLTL, IFVF…IVGL, SGLV…FLST, and MITQ…YALT. One can recognise an ABC transporter 1 domain in the interval 505-724; it reads IEYDGAVQPS…GIDFESIMKT (220 aa). 537 to 544 lines the ATP pocket; sequence GIVGSGKT. Positions 729–756 are disordered; sequence IDENDQSSTSTTDKKSSTSSSSSELKKS. Positions 735-756 are enriched in low complexity; it reads SSTSTTDKKSSTSSSSSELKKS. Transmembrane regions (helical) follow at residues 813–833, 852–872, 941–961, 1036–1056, and 1061–1081; these read LFFL…LSDF, ILYY…RYFM, LFMM…LVVV, GIRL…SSLF, and GFSV…NWTI. In terms of domain architecture, ABC transmembrane type-1 2 spans 814–1093; sequence FFLTCALYFI…MTELEVKMNS (280 aa). An ABC transporter 2 domain is found at 1137 to 1371; sequence VEFKNVEIKY…EGSRFKKLVK (235 aa). Residue 1171–1178 coordinates ATP; sequence GRTGAGKS.

The protein belongs to the ABC transporter superfamily. ABCC family. Conjugate transporter (TC 3.A.1.208) subfamily.

Its subcellular location is the membrane. In Dictyostelium discoideum (Social amoeba), this protein is ABC transporter C family member 2 (abcC2).